The chain runs to 206 residues: Shieldin complex subunit 1 (206 aa).

Composition is skewed to polar residues over residues 1–15 (MATQ…TEES), 33–43 (RPSQQTNSEAF), and 60–69 (DSSNLNTEQN). Disordered regions lie at residues 1–21 (MATQ…LDLP) and 33–69 (RPSQ…TEQN).

Component of the shieldin complex, consisting of SHLD1, SHLD2, SHLD3 and MAD2L2/REV7. Within the complex, SHLD2 forms a scaffold which interacts with a SHLD3-MAD2L2 subcomplex via its N-terminus, and with SHLD1 via its C-terminus. Interacts with ASTE1.

It localises to the chromosome. Functionally, component of the shieldin complex, which plays an important role in repair of DNA double-stranded breaks (DSBs). During G1 and S phase of the cell cycle, the complex functions downstream of TP53BP1 to promote non-homologous end joining (NHEJ) and suppress DNA end resection. Mediates various NHEJ-dependent processes including immunoglobulin class-switch recombination, and fusion of unprotected telomeres. The chain is Shieldin complex subunit 1 from Bos taurus (Bovine).